The following is a 480-amino-acid chain: Adenosylhomocysteinase (480 aa).

Substrate is bound by residues T63, D142, and E203. An NAD(+)-binding site is contributed by 204–206 (TTT). K233 and D237 together coordinate substrate. NAD(+)-binding positions include N238, 267 to 272 (GYGDVG), E290, N325, 346 to 348 (IGH), and N394.

This sequence belongs to the adenosylhomocysteinase family. It depends on NAD(+) as a cofactor.

It localises to the cytoplasm. It catalyses the reaction S-adenosyl-L-homocysteine + H2O = L-homocysteine + adenosine. It functions in the pathway amino-acid biosynthesis; L-homocysteine biosynthesis; L-homocysteine from S-adenosyl-L-homocysteine: step 1/1. In terms of biological role, may play a key role in the regulation of the intracellular concentration of adenosylhomocysteine. The protein is Adenosylhomocysteinase of Xanthomonas axonopodis pv. citri (strain 306).